Here is a 390-residue protein sequence, read N- to C-terminus: Precorrin-6Y C(5,15)-methyltransferase [decarboxylating] (390 aa).

This sequence belongs to the precorrin methyltransferase family.

It catalyses the reaction precorrin-6B + 2 S-adenosyl-L-methionine = precorrin-8X + 2 S-adenosyl-L-homocysteine + CO2 + 3 H(+). The protein operates within cofactor biosynthesis; adenosylcobalamin biosynthesis; cob(II)yrinate a,c-diamide from precorrin-2 (aerobic route): step 7/10. Its function is as follows. Catalyzes the methylation of both C-5 and C-15 in precorrin-6Y to form precorrin-8X. The chain is Precorrin-6Y C(5,15)-methyltransferase [decarboxylating] (cobL) from Mycobacterium tuberculosis (strain CDC 1551 / Oshkosh).